Reading from the N-terminus, the 300-residue chain is Pantoate--beta-alanine ligase (300 aa).

43 to 50 (MGYLHSGH) contributes to the ATP binding site. H50 functions as the Proton donor in the catalytic mechanism. Q74 lines the (R)-pantoate pocket. Position 74 (Q74) interacts with beta-alanine. An ATP-binding site is contributed by 162–165 (GQKD). Residue Q168 participates in (R)-pantoate binding. Residues I191 and 199–202 (KSSR) contribute to the ATP site.

This sequence belongs to the pantothenate synthetase family. As to quaternary structure, homodimer.

The protein localises to the cytoplasm. It carries out the reaction (R)-pantoate + beta-alanine + ATP = (R)-pantothenate + AMP + diphosphate + H(+). Its pathway is cofactor biosynthesis; (R)-pantothenate biosynthesis; (R)-pantothenate from (R)-pantoate and beta-alanine: step 1/1. Functionally, catalyzes the condensation of pantoate with beta-alanine in an ATP-dependent reaction via a pantoyl-adenylate intermediate. The chain is Pantoate--beta-alanine ligase (panC) from Dictyostelium discoideum (Social amoeba).